The following is an 81-amino-acid chain: Protein RALF-like 7 (81 aa).

An N-terminal signal peptide occupies residues 1–29; the sequence is MSARKKNRIHVFFVSIMIIISLVSGFGEG. Disulfide bonds link cysteine 46-cysteine 54 and cysteine 66-cysteine 72.

It belongs to the plant rapid alkalinization factor (RALF) family.

It is found in the secreted. In terms of biological role, cell signaling peptide that may regulate plant stress, growth, and development. Mediates a rapid alkalinization of extracellular space by mediating a transient increase in the cytoplasmic Ca(2+) concentration leading to a calcium-dependent signaling events through a cell surface receptor and a concomitant activation of some intracellular mitogen-activated protein kinases. The protein is Protein RALF-like 7 (RALFL7) of Arabidopsis thaliana (Mouse-ear cress).